Reading from the N-terminus, the 434-residue chain is Glutamate-1-semialdehyde 2,1-aminomutase 1 (434 aa).

Lysine 270 bears the N6-(pyridoxal phosphate)lysine mark.

The protein belongs to the class-III pyridoxal-phosphate-dependent aminotransferase family. HemL subfamily. Homodimer. The cofactor is pyridoxal 5'-phosphate.

The protein resides in the cytoplasm. It catalyses the reaction (S)-4-amino-5-oxopentanoate = 5-aminolevulinate. The protein operates within porphyrin-containing compound metabolism; protoporphyrin-IX biosynthesis; 5-aminolevulinate from L-glutamyl-tRNA(Glu): step 2/2. The chain is Glutamate-1-semialdehyde 2,1-aminomutase 1 from Bacillus cereus (strain ATCC 10987 / NRS 248).